Reading from the N-terminus, the 1183-residue chain is DNA-directed RNA polymerase subunit beta' (1183 aa).

Positions 60, 62, 75, and 78 each coordinate Zn(2+). Mg(2+) is bound by residues D449, D451, and D453. Zn(2+) is bound by residues C794, C867, C874, and C877.

This sequence belongs to the RNA polymerase beta' chain family. The RNAP catalytic core consists of 2 alpha, 1 beta, 1 beta' and 1 omega subunit. When a sigma factor is associated with the core the holoenzyme is formed, which can initiate transcription. It depends on Mg(2+) as a cofactor. Requires Zn(2+) as cofactor.

It catalyses the reaction RNA(n) + a ribonucleoside 5'-triphosphate = RNA(n+1) + diphosphate. Functionally, DNA-dependent RNA polymerase catalyzes the transcription of DNA into RNA using the four ribonucleoside triphosphates as substrates. This chain is DNA-directed RNA polymerase subunit beta', found in Caldanaerobacter subterraneus subsp. tengcongensis (strain DSM 15242 / JCM 11007 / NBRC 100824 / MB4) (Thermoanaerobacter tengcongensis).